Reading from the N-terminus, the 163-residue chain is Protein-export protein SecB (163 aa).

The protein belongs to the SecB family. As to quaternary structure, homotetramer, a dimer of dimers. One homotetramer interacts with 1 SecA dimer.

The protein localises to the cytoplasm. Functionally, one of the proteins required for the normal export of preproteins out of the cell cytoplasm. It is a molecular chaperone that binds to a subset of precursor proteins, maintaining them in a translocation-competent state. It also specifically binds to its receptor SecA. The sequence is that of Protein-export protein SecB from Brucella canis (strain ATCC 23365 / NCTC 10854 / RM-666).